The primary structure comprises 262 residues: Acyl-[acyl-carrier-protein]--UDP-N-acetylglucosamine O-acyltransferase (262 aa).

The protein belongs to the transferase hexapeptide repeat family. LpxA subfamily. As to quaternary structure, homotrimer.

The protein localises to the cytoplasm. It catalyses the reaction a (3R)-hydroxyacyl-[ACP] + UDP-N-acetyl-alpha-D-glucosamine = a UDP-3-O-[(3R)-3-hydroxyacyl]-N-acetyl-alpha-D-glucosamine + holo-[ACP]. It participates in glycolipid biosynthesis; lipid IV(A) biosynthesis; lipid IV(A) from (3R)-3-hydroxytetradecanoyl-[acyl-carrier-protein] and UDP-N-acetyl-alpha-D-glucosamine: step 1/6. Its function is as follows. Involved in the biosynthesis of lipid A, a phosphorylated glycolipid that anchors the lipopolysaccharide to the outer membrane of the cell. This is Acyl-[acyl-carrier-protein]--UDP-N-acetylglucosamine O-acyltransferase from Shigella boydii serotype 18 (strain CDC 3083-94 / BS512).